We begin with the raw amino-acid sequence, 494 residues long: BTB/POZ domain and ankyrin repeat-containing protein NH5.2 (494 aa).

In terms of domain architecture, BTB spans 25 to 131 (SDVAFSVEGR…LYSGQASVAA (107 aa)). The segment at 60–95 (NHQPPPPPPPPLNWPTAGGGGGGSGGGGRGGAGGGG) is disordered. A compositionally biased stretch (pro residues) spans 61 to 72 (HQPPPPPPPPLN). A compositionally biased stretch (gly residues) spans 76-95 (AGGGGGGSGGGGRGGAGGGG). The C2HC NPR-type zinc finger occupies 137–151 (LPGCGARGCWHTRCG). Zn(2+)-binding residues include Cys140, Cys145, His147, and Cys150. ANK repeat units lie at residues 275 to 303 (NKIR…GLDL), 304 to 334 (DDAL…DVNS), 339 to 368 (TGKT…DPNS), and 372 to 406 (DGVT…KLRL). 2 disordered regions span residues 421-443 (DDGA…PRSD) and 471-494 (GEGR…NGFA).

Belongs to the plant 'ANKYRIN-BTB/POZ' family. 'NOOT-BOP-COCH-like' (NBCL) subfamily. As to quaternary structure, homodimer. Interacts with TGAL5, TGAL7, TGAL8 and TGAL9.

The protein resides in the nucleus. The protein localises to the cytoplasm. It participates in protein modification; protein ubiquitination. Functionally, may act as a substrate-specific adapter of an E3 ubiquitin-protein ligase complex (CUL3-RBX1-BTB) which mediates the ubiquitination and subsequent proteasomal degradation of target proteins. Transcriptional co-regulator involved in the promotion of leaf and floral meristem fate and determinacy. Required for the abscission of senescent organs, probably by regulating the cell wall disorganization in abscission zones (AZs, e.g. pulvini at the base of leaves). In Oryza sativa subsp. japonica (Rice), this protein is BTB/POZ domain and ankyrin repeat-containing protein NH5.2.